Here is a 491-residue protein sequence, read N- to C-terminus: Proline--tRNA ligase (491 aa).

Belongs to the class-II aminoacyl-tRNA synthetase family. ProS type 3 subfamily. As to quaternary structure, homodimer.

It is found in the cytoplasm. It catalyses the reaction tRNA(Pro) + L-proline + ATP = L-prolyl-tRNA(Pro) + AMP + diphosphate. Functionally, catalyzes the attachment of proline to tRNA(Pro) in a two-step reaction: proline is first activated by ATP to form Pro-AMP and then transferred to the acceptor end of tRNA(Pro). This chain is Proline--tRNA ligase, found in Halorubrum lacusprofundi (strain ATCC 49239 / DSM 5036 / JCM 8891 / ACAM 34).